We begin with the raw amino-acid sequence, 148 residues long: Lysozyme C (148 aa).

An N-terminal signal peptide occupies residues 1-18; that stretch reads MKAVIILGLVLLSVTVQG. The C-type lysozyme domain maps to 19-148; that stretch reads KIFERCELAR…VSQYVQGCGV (130 aa). Cystine bridges form between Cys-24-Cys-146, Cys-48-Cys-134, Cys-83-Cys-99, and Cys-95-Cys-113. Catalysis depends on residues Glu-53 and Asp-71.

Belongs to the glycosyl hydrolase 22 family. As to quaternary structure, monomer.

The catalysed reaction is Hydrolysis of (1-&gt;4)-beta-linkages between N-acetylmuramic acid and N-acetyl-D-glucosamine residues in a peptidoglycan and between N-acetyl-D-glucosamine residues in chitodextrins.. Functionally, lysozymes have primarily a bacteriolytic function; those in tissues and body fluids are associated with the monocyte-macrophage system and enhance the activity of immunoagents. In Allenopithecus nigroviridis (Allen's swamp monkey), this protein is Lysozyme C (LYZ).